Here is a 302-residue protein sequence, read N- to C-terminus: 4-hydroxy-tetrahydrodipicolinate synthase (302 aa).

Thr44 contacts pyruvate. Residue Tyr132 is the Proton donor/acceptor of the active site. The Schiff-base intermediate with substrate role is filled by Lys160. Position 202 (Val202) interacts with pyruvate.

The protein belongs to the DapA family. Homotetramer; dimer of dimers.

The protein resides in the cytoplasm. It catalyses the reaction L-aspartate 4-semialdehyde + pyruvate = (2S,4S)-4-hydroxy-2,3,4,5-tetrahydrodipicolinate + H2O + H(+). It participates in amino-acid biosynthesis; L-lysine biosynthesis via DAP pathway; (S)-tetrahydrodipicolinate from L-aspartate: step 3/4. Its function is as follows. Catalyzes the condensation of (S)-aspartate-beta-semialdehyde [(S)-ASA] and pyruvate to 4-hydroxy-tetrahydrodipicolinate (HTPA). This Thermomicrobium roseum (strain ATCC 27502 / DSM 5159 / P-2) protein is 4-hydroxy-tetrahydrodipicolinate synthase.